Reading from the N-terminus, the 560-residue chain is Choline/ethanolamine transporter FLVCR1 (560 aa).

A disordered region spans residues 1–43; that stretch reads MARPDDEVGPAVAPGHPLGKGYLPVPKGAPDGEARLVPQNGPE. The Cytoplasmic segment spans residues 1–92; that stretch reads MARPDDEVGP…EDVPCPACPP (92 aa). Residues 93-117 form a helical membrane-spanning segment; it reads RTALSPRRFVVLLIFSLYSLVNAFQ. The Extracellular segment spans residues 118–135; sequence WIQYSSISNVFEDFYEVS. A helical transmembrane segment spans residues 136-163; it reads PLHINWLSMVYMVAYVPLIFPATWLLDT. At 164 to 165 the chain is on the cytoplasmic side; sequence RG. Residues 166 to 185 form a helical membrane-spanning segment; sequence LRLTALLGSGLNCLGAWVKC. At 186–192 the chain is on the extracellular side; it reads GSVQRHL. Residues 193–221 form a helical membrane-spanning segment; it reads FWVTMLGQILCSVAQVFILGLPSPVASVW. Gln-207 is a binding site for ethanolamine. Topologically, residues 222 to 226 are cytoplasmic; that stretch reads FGPKE. Residues 227–252 traverse the membrane as a helical segment; sequence VSTACATAVLGNQLGTAVGFLLPPVL. Residues 253–270 lie on the Extracellular side of the membrane; that stretch reads VPALGTQNNTGLLAHTQN. The N-linked (GlcNAc...) asparagine glycan is linked to Asn-270. A helical transmembrane segment spans residues 271-300; sequence NTDLLAHNINTMFYGTAFISTFLFFLTVIA. Over 301–336 the chain is Cytoplasmic; sequence FKEKPPLPPSQAQAILRDSPPEEYSYKSSIWNLCRN. The helical transmembrane segment at 337–367 threads the bilayer; sequence IPFVLLLVSYGIMTGAFYSISTLLNQIILTY. At 368 to 371 the chain is on the extracellular side; it reads YVGE. Residues 372-400 form a helical membrane-spanning segment; sequence EVNAGRIGLTLVVAGMVGSILCGLWLDYT. The Cytoplasmic portion of the chain corresponds to 401 to 402; it reads KT. A helical transmembrane segment spans residues 403–425; sequence YKQTTLIVYVLSFIGMLIFTFTL. Residues 426-428 lie on the Extracellular side of the membrane; the sequence is NLG. A helical transmembrane segment spans residues 429–458; the sequence is YIVALFFTGGILGFFMTGYLPLGFEFAVEI. The Cytoplasmic segment spans residues 459–466; sequence TYPESEGM. Residues 467–492 form a helical membrane-spanning segment; it reads SSGLLNTAAQILGIFFTLAQGKITTD. Gln-476 contributes to the ethanolamine binding site. Gln-476 contributes to the choline binding site. The Extracellular portion of the chain corresponds to 493–495; the sequence is YNS. Residues 496 to 518 traverse the membrane as a helical segment; that stretch reads PEAGNIFLCAWMFVGIILTALIK. Residues 519–560 lie on the Cytoplasmic side of the membrane; it reads SDLRRHNINTGLTNIDVKAVPVDSRVDPKPKAMVSIQSESSL. The residue at position 542 (Ser-542) is a Phosphoserine.

Belongs to the major facilitator superfamily. Feline leukemia virus subgroup C receptor (TC 2.A.1.28.1) family.

The protein resides in the cell membrane. It carries out the reaction choline(out) = choline(in). The enzyme catalyses ethanolamine(in) = ethanolamine(out). The catalysed reaction is heme b(in) = heme b(out). In terms of biological role, uniporter that mediates the transport of extracellular choline and ethanolamine into cells, thereby playing a key role in phospholipid biosynthesis. Choline and ethanolamine are the precursors of phosphatidylcholine and phosphatidylethanolamine, respectively, the two most abundant phospholipids. Transport is not coupled with proton transport and is exclusively driven by the choline (or ethanolamine) gradient across the plasma membrane. Also acts as a heme b transporter that mediates heme efflux from the cytoplasm to the extracellular compartment. This chain is Choline/ethanolamine transporter FLVCR1 (Flvcr1), found in Mus terricolor (Earth-colored mouse).